Reading from the N-terminus, the 366-residue chain is Galactoside alpha-(1,2)-fucosyltransferase 1 (366 aa).

Residues Met-1–His-8 lie on the Cytoplasmic side of the membrane. Residues Leu-9–Phe-25 form a helical; Signal-anchor for type II membrane protein membrane-spanning segment. The Lumenal portion of the chain corresponds to Leu-26–Pro-366. N-linked (GlcNAc...) asparagine glycans are attached at residues Asn-66, Asn-302, and Asn-328.

This sequence belongs to the glycosyltransferase 11 family.

It localises to the golgi apparatus. The protein resides in the golgi stack membrane. It carries out the reaction a beta-D-galactosyl-(1-&gt;4)-N-acetyl-beta-D-glucosaminyl derivative + GDP-beta-L-fucose = an alpha-L-Fuc-(1-&gt;2)-beta-D-Gal-(1-&gt;4)-beta-D-GlcNAc derivative + GDP + H(+). The enzyme catalyses a ganglioside GA1 + GDP-beta-L-fucose = a ganglioside Fuc-GA1 + GDP + H(+). It catalyses the reaction a beta-D-Gal-(1-&gt;3)-beta-D-GlcNAc-(1-&gt;3)-beta-D-Gal-(1-&gt;4)-beta-D-Glc-(1&lt;-&gt;1')-Cer(d18:1(4E)) + GDP-beta-L-fucose = alpha-L-fucosyl-(1-&gt;2)- beta-D-galactosyl-(1-&gt;3)-N-acetyl-beta-D-glucosaminyl-(1-&gt;3)-beta-D-galactosyl-(1-&gt;4)-beta-D-glucosyl-(1&lt;-&gt;1')-N-acylsphing-4-enine + GDP + H(+). The catalysed reaction is a neolactoside nLc4Cer(d18:1(4E)) + GDP-beta-L-fucose = a neolactoside IV(2)-alpha-Fuc-nLc4Cer(d18:1(4E)) + GDP + H(+). It carries out the reaction a ganglioside GM1 + GDP-beta-L-fucose = a ganglioside Fuc-GM1 + GDP + H(+). The enzyme catalyses beta-D-galactosyl-(1-&gt;3)-N-acetyl-D-galactosamine + GDP-beta-L-fucose = alpha-L-fucosyl-(1-&gt;2)-beta-D-galactosyl-(1-&gt;3)-N-acetyl-D-galactosamine + GDP + H(+). It participates in protein modification; protein glycosylation. In terms of biological role, catalyzes the transfer of L-fucose, from a guanosine diphosphate-beta-L-fucose, to the terminal galactose residue of glycoconjugates through an alpha(1,2) linkage leading to H antigen synthesis that is an intermediate substrate in the synthesis of ABO blood group antigens. H antigen is essential for maturation of the glomerular layer of the main olfactory bulb, in cell migration and early cell-cell contacts during tumor associated angiogenesis. Preferentially fucosylates soluble lactose and to a lesser extent fucosylates glycolipids gangliosides GA1 and GM1a. The sequence is that of Galactoside alpha-(1,2)-fucosyltransferase 1 from Ateles belzebuth (White-bellied spider monkey).